We begin with the raw amino-acid sequence, 318 residues long: Thioredoxin reductase (318 aa).

36–43 serves as a coordination point for FAD; that stretch reads TGMQQGGQ. Residues C136 and C139 are joined by a disulfide bond. Position 286–295 (286–295) interacts with FAD; it reads DVMDHNYRQA.

The protein belongs to the class-II pyridine nucleotide-disulfide oxidoreductase family. In terms of assembly, homodimer. FAD serves as cofactor.

Its subcellular location is the cytoplasm. The enzyme catalyses [thioredoxin]-dithiol + NADP(+) = [thioredoxin]-disulfide + NADPH + H(+). This is Thioredoxin reductase (trxB) from Vibrio cholerae serotype O1 (strain ATCC 39315 / El Tor Inaba N16961).